The following is a 338-amino-acid chain: Protein-glutamate methylesterase/protein-glutamine glutaminase 2 (338 aa).

In terms of domain architecture, Response regulatory spans 2–119; it reads RIGIVNDSAL…SDTKLAAGPL (118 aa). D53 carries the post-translational modification 4-aspartylphosphate. Residues 145-330 enclose the CheB-type methylesterase domain; the sequence is PTPTAPRLVA…PLQKIAPRLV (186 aa). Active-site residues include S158, H185, and D278.

Belongs to the CheB family. Phosphorylated by CheA. Phosphorylation of the N-terminal regulatory domain activates the methylesterase activity.

The protein resides in the cytoplasm. It catalyses the reaction [protein]-L-glutamate 5-O-methyl ester + H2O = L-glutamyl-[protein] + methanol + H(+). The catalysed reaction is L-glutaminyl-[protein] + H2O = L-glutamyl-[protein] + NH4(+). In terms of biological role, involved in chemotaxis. Part of a chemotaxis signal transduction system that modulates chemotaxis in response to various stimuli. Catalyzes the demethylation of specific methylglutamate residues introduced into the chemoreceptors (methyl-accepting chemotaxis proteins or MCP) by CheR. Also mediates the irreversible deamidation of specific glutamine residues to glutamic acid. The sequence is that of Protein-glutamate methylesterase/protein-glutamine glutaminase 2 from Cupriavidus metallidurans (strain ATCC 43123 / DSM 2839 / NBRC 102507 / CH34) (Ralstonia metallidurans).